The chain runs to 480 residues: Bifunctional protein HldE (480 aa).

Positions 1 to 316 (MNMHDFSKTK…EQLNASMRHQ (316 aa)) are ribokinase. Residue 192-195 (NQGE) coordinates ATP. Asp261 is a catalytic residue. A cytidylyltransferase region spans residues 342 to 480 (FTNGCFDLLH…EAEIKEGAAQ (139 aa)).

It in the N-terminal section; belongs to the carbohydrate kinase PfkB family. This sequence in the C-terminal section; belongs to the cytidylyltransferase family. In terms of assembly, homodimer.

The catalysed reaction is D-glycero-beta-D-manno-heptose 7-phosphate + ATP = D-glycero-beta-D-manno-heptose 1,7-bisphosphate + ADP + H(+). It carries out the reaction D-glycero-beta-D-manno-heptose 1-phosphate + ATP + H(+) = ADP-D-glycero-beta-D-manno-heptose + diphosphate. It participates in nucleotide-sugar biosynthesis; ADP-L-glycero-beta-D-manno-heptose biosynthesis; ADP-L-glycero-beta-D-manno-heptose from D-glycero-beta-D-manno-heptose 7-phosphate: step 1/4. The protein operates within nucleotide-sugar biosynthesis; ADP-L-glycero-beta-D-manno-heptose biosynthesis; ADP-L-glycero-beta-D-manno-heptose from D-glycero-beta-D-manno-heptose 7-phosphate: step 3/4. Catalyzes the phosphorylation of D-glycero-D-manno-heptose 7-phosphate at the C-1 position to selectively form D-glycero-beta-D-manno-heptose-1,7-bisphosphate. Functionally, catalyzes the ADP transfer from ATP to D-glycero-beta-D-manno-heptose 1-phosphate, yielding ADP-D-glycero-beta-D-manno-heptose. This chain is Bifunctional protein HldE, found in Hydrogenovibrio crunogenus (strain DSM 25203 / XCL-2) (Thiomicrospira crunogena).